The primary structure comprises 316 residues: Secondary metabolism regulator LAE1 (316 aa).

Belongs to the methyltransferase superfamily. LaeA methyltransferase family. In terms of assembly, component of the heterotrimeric velvet complex composed of LAE1, VEL1 and VEL2; VEL1 acting as a bridging protein between LAE1 and VEL2. Interacts with VEL1.

It localises to the nucleus. It carries out the reaction L-methionyl-[protein] + S-adenosyl-L-methionine = S-methyl-L-methionyl-[protein] + S-adenosyl-L-homocysteine. In terms of biological role, methyltransferase that performs automethylation. No other methyl-accepting substrate has been identified yet. Component of the velvet transcription factor complex that acts as a global regulator for secondary metabolite gene expression. Controls the expression of the gibberellins gene clusters, but does not affect bikaverin production. Controls the expression of the fusaric acid gene cluster. Acts as a virulence factors during infection, most likely through activation of gibberellins biosynthesis. In Gibberella fujikuroi (strain CBS 195.34 / IMI 58289 / NRRL A-6831) (Bakanae and foot rot disease fungus), this protein is Secondary metabolism regulator LAE1.